The chain runs to 669 residues: UvrABC system protein C (669 aa).

The 80-residue stretch at 16–95 (TNPGVYRFRD…IKEFKPRFNV (80 aa)) folds into the GIY-YIG domain. A UVR domain is found at 207 to 242 (KRFIGRLEKDMAAAVAELDYERAARVRDDIIALRKV).

Belongs to the UvrC family. As to quaternary structure, interacts with UvrB in an incision complex.

It localises to the cytoplasm. In terms of biological role, the UvrABC repair system catalyzes the recognition and processing of DNA lesions. UvrC both incises the 5' and 3' sides of the lesion. The N-terminal half is responsible for the 3' incision and the C-terminal half is responsible for the 5' incision. This chain is UvrABC system protein C, found in Arthrobacter sp. (strain FB24).